The chain runs to 322 residues: GTP 3',8-cyclase (322 aa).

Residues 5 to 217 enclose the Radical SAM core domain; it reads SYGRVVDYLR…DIISKKYNIK (213 aa). R14 lines the GTP pocket. The [4Fe-4S] cluster site is built by C21 and C25. An S-adenosyl-L-methionine-binding site is contributed by Y27. [4Fe-4S] cluster is bound at residue C28. R64 provides a ligand contact to GTP. Residue G68 participates in S-adenosyl-L-methionine binding. T95 serves as a coordination point for GTP. S119 is an S-adenosyl-L-methionine binding site. K155 is a binding site for GTP. M189 lines the S-adenosyl-L-methionine pocket. [4Fe-4S] cluster is bound by residues C249 and C252. Residue 254–256 participates in GTP binding; it reads RLR. Position 266 (C266) interacts with [4Fe-4S] cluster.

It belongs to the radical SAM superfamily. MoaA family. As to quaternary structure, monomer and homodimer. [4Fe-4S] cluster is required as a cofactor.

It catalyses the reaction GTP + AH2 + S-adenosyl-L-methionine = (8S)-3',8-cyclo-7,8-dihydroguanosine 5'-triphosphate + 5'-deoxyadenosine + L-methionine + A + H(+). It participates in cofactor biosynthesis; molybdopterin biosynthesis. Its function is as follows. Catalyzes the cyclization of GTP to (8S)-3',8-cyclo-7,8-dihydroguanosine 5'-triphosphate. The protein is GTP 3',8-cyclase of Campylobacter fetus subsp. fetus (strain 82-40).